Reading from the N-terminus, the 4467-residue chain is Protocadherin-like protein (4467 aa).

Residues 1–22 form the signal peptide; the sequence is MRGINAIVGFLLCFCLLHRINT. Cadherin domains lie at 23–128, 129–238, 239–350, 351–455, 459–566, 567–664, 665–764, 765–884, 885–994, 1092–1197, 1290–1395, 1396–1499, 1495–1597, 1601–1701, 1793–1891, 1892–1992, 1993–2100, 2101–2202, 2203–2312, 2313–2423, 2425–2529, 2530–2639, 2640–2746, 2747–2849, 2850–2954, 2955–3062, 3063–3170, and 3173–3288; these read AVQF…SPTF, PQHL…SPVF, EKKS…VPVF, QEES…TPVF, NPQQ…NPDF, SKVV…PPTF, KNAP…PPTF, SRSS…SPEF, SQTS…PPLF, EAQP…QPRF, SRTV…SPKF, SADS…PPKF, GPPK…EPQF, SNGF…QPVR, TMID…KPQF, SESA…YPKF, EPNL…KPQF, LESD…RPVF, TDCP…FPFF, LTRT…PPAF, PSAV…TPTF, KLEE…PPIF, PKPS…IPKF, DNLI…SPYF, PNPP…APVF, NPRE…PPVF, VPAE…GPWF, and RYYE…EPFD. Topologically, residues 23–4258 are extracellular; that stretch reads AVQFKQEILE…RPSSRWANPA (4236 aa). Residues 3551–3589 enclose the EGF-like 1 domain; it reads PDINCTTGTPCLHGGTCHNAVPKGIICECGRDYLGPECQ. 7 disulfide bridges follow: Cys-3555/Cys-3567, Cys-3561/Cys-3577, Cys-3579/Cys-3588, Cys-3762/Cys-3788, Cys-3794/Cys-3803, Cys-3797/Cys-3812, and Cys-3814/Cys-3823. In terms of domain architecture, Laminin G-like 1 spans 3590-3788; it reads STTRTFRGNS…LKEVNTELGC (199 aa). An EGF-like 2 domain is found at 3790 to 3824; sequence LNNQCPNCNGRGYCEPFWNYAICVCDLGFGGANCD. The Laminin G-like 2 domain maps to 3842–4096; it reads VKQVKRKRRE…KVIISSSGGS (255 aa). Positions 4089-4118 are disordered; it reads IISSSGGSVSGGSGGASGGSGGASGSGGSV. Gly residues predominate over residues 4096 to 4118; sequence SVSGGSGGASGGSGGASGSGGSV. Residues 4206 to 4238 enclose the EGF-like 3 domain; sequence PCGSNFCRHGGTCVSADPPYCLCPVGWSGPVCE. Cystine bridges form between Cys-4207–Cys-4218, Cys-4212–Cys-4226, and Cys-4228–Cys-4237. A helical transmembrane segment spans residues 4259 to 4279; that stretch reads VIACILVILLAILVIIGAVLL. The Cytoplasmic portion of the chain corresponds to 4280–4467; that stretch reads KRRPQPAVVA…NLNRIFNEDE (188 aa). The disordered stretch occupies residues 4424 to 4445; the sequence is DVDDLSELGDSDEEPDEEEEQE.

As to expression, component of the acid-insoluble organic matrix of the aragonitic skeleton (at protein level).

It is found in the membrane. This Acropora millepora (Staghorn coral) protein is Protocadherin-like protein.